The chain runs to 134 residues: Peroxisomal testis-specific protein 1 (134 aa).

Residues 131-134 (NHLL) carry the Microbody targeting signal motif.

The protein resides in the peroxisome. The polypeptide is Peroxisomal testis-specific protein 1 (PXT1) (Homo sapiens (Human)).